A 339-amino-acid chain; its full sequence is Dihydroorotate dehydrogenase (quinone) (339 aa).

Residues 61 to 65 (AGLDK) and threonine 85 contribute to the FMN site. Lysine 65 contacts substrate. 110 to 114 (NRMGF) lines the substrate pocket. Residues asparagine 138 and asparagine 171 each coordinate FMN. Asparagine 171 is a substrate binding site. Serine 174 functions as the Nucleophile in the catalytic mechanism. Substrate is bound at residue asparagine 176. The FMN site is built by lysine 216 and threonine 244. 245-246 (NT) contributes to the substrate binding site. FMN contacts are provided by residues glycine 267, glycine 296, and 317-318 (YS).

It belongs to the dihydroorotate dehydrogenase family. Type 2 subfamily. Monomer. Requires FMN as cofactor.

It localises to the cell membrane. The enzyme catalyses (S)-dihydroorotate + a quinone = orotate + a quinol. The protein operates within pyrimidine metabolism; UMP biosynthesis via de novo pathway; orotate from (S)-dihydroorotate (quinone route): step 1/1. Its function is as follows. Catalyzes the conversion of dihydroorotate to orotate with quinone as electron acceptor. The chain is Dihydroorotate dehydrogenase (quinone) from Saccharophagus degradans (strain 2-40 / ATCC 43961 / DSM 17024).